The following is a 157-amino-acid chain: 2-C-methyl-D-erythritol 2,4-cyclodiphosphate synthase (157 aa).

Residues Asp9 and His11 each contribute to the a divalent metal cation site. 4-CDP-2-C-methyl-D-erythritol 2-phosphate is bound by residues 9 to 11 (DVH) and 35 to 36 (HS). Position 43 (His43) interacts with a divalent metal cation. 4-CDP-2-C-methyl-D-erythritol 2-phosphate-binding positions include 57–59 (DIG), Phe140, and Arg143.

The protein belongs to the IspF family. Homotrimer. A divalent metal cation is required as a cofactor.

It catalyses the reaction 4-CDP-2-C-methyl-D-erythritol 2-phosphate = 2-C-methyl-D-erythritol 2,4-cyclic diphosphate + CMP. It participates in isoprenoid biosynthesis; isopentenyl diphosphate biosynthesis via DXP pathway; isopentenyl diphosphate from 1-deoxy-D-xylulose 5-phosphate: step 4/6. Involved in the biosynthesis of isopentenyl diphosphate (IPP) and dimethylallyl diphosphate (DMAPP), two major building blocks of isoprenoid compounds. Catalyzes the conversion of 4-diphosphocytidyl-2-C-methyl-D-erythritol 2-phosphate (CDP-ME2P) to 2-C-methyl-D-erythritol 2,4-cyclodiphosphate (ME-CPP) with a corresponding release of cytidine 5-monophosphate (CMP). This is 2-C-methyl-D-erythritol 2,4-cyclodiphosphate synthase from Caldicellulosiruptor bescii (strain ATCC BAA-1888 / DSM 6725 / KCTC 15123 / Z-1320) (Anaerocellum thermophilum).